We begin with the raw amino-acid sequence, 179 residues long: Signal peptidase complex subunit 3 (179 aa).

Residues 1–12 are Cytoplasmic-facing; sequence MHTVLTRGNATV. A helical; Signal-anchor for type II membrane protein membrane pass occupies residues 13–33; sequence AYTLSVLACLTFSCFLSTVFL. The Lumenal portion of the chain corresponds to 34-179; sequence DYRTDANINT…FPADYATSSI (146 aa). 2 N-linked (GlcNAc...) asparagine glycosylation sites follow: N73 and N141.

It belongs to the SPCS3 family. As to quaternary structure, component of the signal peptidase complex (SPC) composed of a catalytic subunit twr/SEC11 and three accessory subunits Spase12/SPCS1, Spase25/SPCS2 and Spase22-23/SPCS3. The complex induces a local thinning of the ER membrane which is used to measure the length of the signal peptide (SP) h-region of protein substrates. This ensures the selectivity of the complex towards h-regions shorter than 18-20 amino acids.

The protein localises to the endoplasmic reticulum membrane. In terms of biological role, essential component of the signal peptidase complex (SPC) which catalyzes the cleavage of N-terminal signal sequences from nascent proteins as they are translocated into the lumen of the endoplasmic reticulum. Essential for the SPC catalytic activity, possibly by stabilizing and positioning the active center of the complex close to the lumenal surface. Functionally, (Microbial infection) Plays an important role in infection by flaviviruses such as West Nile virus and Dengue virus type 2. This chain is Signal peptidase complex subunit 3 (Spase22-23), found in Drosophila melanogaster (Fruit fly).